Reading from the N-terminus, the 327-residue chain is Acetyl-coenzyme A carboxylase carboxyl transferase subunit beta (327 aa).

The 270-residue stretch at 24-293 (LWIKCPDTGQ…LTVTTAVEAP (270 aa)) folds into the CoA carboxyltransferase N-terminal domain. A compositionally biased stretch (low complexity) spans 293 to 311 (PAEAAAKAEPEATTTEQPG). A disordered region spans residues 293–327 (PAEAAAKAEPEATTTEQPGAPAPTEPPAQPAAPQA). The segment covering 312-327 (APAPTEPPAQPAAPQA) has biased composition (pro residues).

It belongs to the AccD/PCCB family. As to quaternary structure, acetyl-CoA carboxylase is a heterohexamer composed of biotin carboxyl carrier protein (AccB), biotin carboxylase (AccC) and two subunits each of ACCase subunit alpha (AccA) and ACCase subunit beta (AccD).

The protein localises to the cytoplasm. The enzyme catalyses N(6)-carboxybiotinyl-L-lysyl-[protein] + acetyl-CoA = N(6)-biotinyl-L-lysyl-[protein] + malonyl-CoA. Its pathway is lipid metabolism; malonyl-CoA biosynthesis; malonyl-CoA from acetyl-CoA: step 1/1. Functionally, component of the acetyl coenzyme A carboxylase (ACC) complex. Biotin carboxylase (BC) catalyzes the carboxylation of biotin on its carrier protein (BCCP) and then the CO(2) group is transferred by the transcarboxylase to acetyl-CoA to form malonyl-CoA. In Rhodopseudomonas palustris (strain ATCC BAA-98 / CGA009), this protein is Acetyl-coenzyme A carboxylase carboxyl transferase subunit beta.